Consider the following 209-residue polypeptide: MSTELAAWLGHMGIRDRRVLDAIAALDRARFVSRDLSAEAYADRPLPIGFGQTISQPYVVAFMTEALELEGGERVLEVGTGSGYQTALLARLAGEVWSVEIVPGLAARARALLLEELGLANVHLREGDGALGWPEAAPFERILVTAAAPRVPPALRAQLAPGGRMVLPVGEAESEQVLRVVERGADGIEESEDVLPVRFVPLTHLPPAV.

Ser-55 is a catalytic residue.

This sequence belongs to the methyltransferase superfamily. L-isoaspartyl/D-aspartyl protein methyltransferase family.

The protein resides in the cytoplasm. It carries out the reaction [protein]-L-isoaspartate + S-adenosyl-L-methionine = [protein]-L-isoaspartate alpha-methyl ester + S-adenosyl-L-homocysteine. In terms of biological role, catalyzes the methyl esterification of L-isoaspartyl residues in peptides and proteins that result from spontaneous decomposition of normal L-aspartyl and L-asparaginyl residues. It plays a role in the repair and/or degradation of damaged proteins. This chain is Protein-L-isoaspartate O-methyltransferase, found in Anaeromyxobacter dehalogenans (strain 2CP-1 / ATCC BAA-258).